The chain runs to 665 residues: MSSQDLYANAATDKPLMQVKGLIREFKAGEQTIRVLHDINLTIHQGEMVAIIGQSGSGKSTLMNILGCLDQATAGDYQVFGQSVNRLAPDELAKLRREHFGFIFQRYHLLGDISARDNVSVPAVYAGMDGQARNERAEQLLSDLGLADKVNNRPSQLSGGQQQRVSIARALMNGGDIILADEPTGALDSKSGKDVVQILKNLNAQGHTIIMVTHDPGLAAQAERVIEIKDGYIIADYKNEDYQRPVAQFSSIIDKHRKSAFGSFIDRLLESFKMSLLAMRAHKMRTLLTMLGIIIGIASVVSVVGLGKGSQEQILSNISSLGTNTITITDGYPYGDPRRQYNDDNLTPQDAQAVADQPYVLSVSPQLNSNMSVRYRNVQEAASISGVGKDYLDVSGETLAMGQGFDEQSILRRTQDIIIDSNAHKTFFPTTANPIGEVLLIGSVPGRVIGVLEPNEGGFSRSVDSPTLYMPYTTMMSRLIGSAYIESFVALIDNNISSSAAESAISNLMKSRHGTDDFRIRNSDSIRQTIESTTAAMTLLISSIAIISLIVGGIGVMNIMLVSVTERTNEIGVRMAVGARQSDIMQQFLIEAVLVCILGGLLGIGMAFAIGELINRVGGDSFKVIYSSTSIIAAFVCSTLIGVVFGFLPARNAAKLDPVEALSRD.

An ABC transporter domain is found at 17–255; it reads MQVKGLIREF…VAQFSSIIDK (239 aa). Residue 53-60 participates in ATP binding; the sequence is GQSGSGKS. A run of 4 helical transmembrane segments spans residues 287–307, 544–564, 588–608, and 630–650; these read LLTM…VGLG, IAII…LVSV, FLIE…GMAF, and SIIA…FLPA.

The protein belongs to the ABC transporter superfamily. Macrolide exporter (TC 3.A.1.122) family. Homodimer. Part of the tripartite efflux system MacAB-TolC, which is composed of an inner membrane transporter, MacB, a periplasmic membrane fusion protein, MacA, and an outer membrane component, TolC. The complex forms a large protein conduit and can translocate molecules across both the inner and outer membranes. Interacts with MacA.

Its subcellular location is the cell inner membrane. Its function is as follows. Part of the tripartite efflux system MacAB-TolC. MacB is a non-canonical ABC transporter that contains transmembrane domains (TMD), which form a pore in the inner membrane, and an ATP-binding domain (NBD), which is responsible for energy generation. Confers resistance against macrolides. In Psychrobacter arcticus (strain DSM 17307 / VKM B-2377 / 273-4), this protein is Macrolide export ATP-binding/permease protein MacB.